Reading from the N-terminus, the 305-residue chain is Probable cell division protein WhiA (305 aa).

A DNA-binding region (H-T-H motif) is located at residues 269-302 (TIKELGELLDPPLGKSGVNHRLRKLVERSNDLKK).

Belongs to the WhiA family.

Its function is as follows. Involved in cell division and chromosome segregation. The sequence is that of Probable cell division protein WhiA from Lactococcus lactis subsp. cremoris (strain MG1363).